Reading from the N-terminus, the 782-residue chain is Shutoff protein (782 aa).

The binding to host EIF4G stretch occupies residues 262–329 (VMNQLLIKRA…AVLVTVELEC (68 aa)). The 119-residue stretch at 332–450 (RFFSDITTLR…SLWTGFDERT (119 aa)) folds into the RRM domain. Residues Y349 and Y665 each carry the phosphotyrosine; by host modification. The disordered stretch occupies residues 715-760 (GGRILGESGRGRGRGLGRMGGGGGGQPRRGSRGGGGRFQGRSDRRQ). The span at 728 to 752 (RGLGRMGGGGGGQPRRGSRGGGGRF) shows a compositional bias: gly residues.

This sequence belongs to the adenoviridae shutoff protein family. As to quaternary structure, monomer. Interacts with hexon protein; this interaction allows chaperoning and trimerization of hexon proteins. Interacts (via N-terminus) with host initiation factor EIF4G (via C-terminus). Interacts (via RRM domain) with viral mRNAs that contain the tripartite leader; this interaction allows ribosome shunting and expression of viral late mRNAs. Might be cleaved by the viral protease. In terms of processing, phosphorylated. Tyrosine phosphorylation enhances preferential binding to tripartite leader mRNAs and allows ribosome shunting. Post-translationally, methylated. Asymmetric dimethylation by host PRMT1 of the Arg/Gly-rich region may regulate shutoff protein binding to hexon and promote the capsid assembly in the nucleus.

The protein localises to the host cytoplasm. In terms of biological role, protein that inhibits host translation while promoting late viral translation by ribosome shunting. Blocks host cap-dependent translation by binding to eIF4G, displacing MKNK1 from cap initiation complexes and preventing EIF4E phosphorylation. Binds to the tripartite leader sequence of viral late mRNAs and recruits host eIF4G, PABPC1/poly-A binding protein and 40S ribosomes subunits on viral mRNAs, allowing ribosome shunting and efficient translation of late viral mRNAs even though conventional translation via ribosome scanning from the cap has been shut off in the host cell. During assembly, acts as a chaperone protein that helps hexon proteins assembly into trimers. The sequence is that of Shutoff protein from Human adenovirus A serotype 12 (HAdV-12).